The following is a 165-amino-acid chain: Crossover junction endodeoxyribonuclease RuvC (165 aa).

Catalysis depends on residues Asp7, Glu67, and Asp140. Residues Asp7, Glu67, and Asp140 each contribute to the Mg(2+) site.

Belongs to the RuvC family. In terms of assembly, homodimer which binds Holliday junction (HJ) DNA. The HJ becomes 2-fold symmetrical on binding to RuvC with unstacked arms; it has a different conformation from HJ DNA in complex with RuvA. In the full resolvosome a probable DNA-RuvA(4)-RuvB(12)-RuvC(2) complex forms which resolves the HJ. Requires Mg(2+) as cofactor.

The protein resides in the cytoplasm. It carries out the reaction Endonucleolytic cleavage at a junction such as a reciprocal single-stranded crossover between two homologous DNA duplexes (Holliday junction).. Its function is as follows. The RuvA-RuvB-RuvC complex processes Holliday junction (HJ) DNA during genetic recombination and DNA repair. Endonuclease that resolves HJ intermediates. Cleaves cruciform DNA by making single-stranded nicks across the HJ at symmetrical positions within the homologous arms, yielding a 5'-phosphate and a 3'-hydroxyl group; requires a central core of homology in the junction. The consensus cleavage sequence is 5'-(A/T)TT(C/G)-3'. Cleavage occurs on the 3'-side of the TT dinucleotide at the point of strand exchange. HJ branch migration catalyzed by RuvA-RuvB allows RuvC to scan DNA until it finds its consensus sequence, where it cleaves and resolves the cruciform DNA. In Desulfitobacterium hafniense (strain DSM 10664 / DCB-2), this protein is Crossover junction endodeoxyribonuclease RuvC.